A 131-amino-acid polypeptide reads, in one-letter code: Large ribosomal subunit protein bL17 (131 aa).

Belongs to the bacterial ribosomal protein bL17 family. As to quaternary structure, part of the 50S ribosomal subunit. Contacts protein L32.

In Azoarcus sp. (strain BH72), this protein is Large ribosomal subunit protein bL17.